A 666-amino-acid polypeptide reads, in one-letter code: tRNA 5-methylaminomethyl-2-thiouridine biosynthesis bifunctional protein MnmC (666 aa).

The tract at residues 1–245 (MKQYAIQPAT…KREMLCGVME (245 aa)) is tRNA (mnm(5)s(2)U34)-methyltransferase. An FAD-dependent cmnm(5)s(2)U34 oxidoreductase region spans residues 270 to 666 (IGGGIASALL…RKLLKGKAVK (397 aa)).

It in the N-terminal section; belongs to the methyltransferase superfamily. tRNA (mnm(5)s(2)U34)-methyltransferase family. The protein in the C-terminal section; belongs to the DAO family. The cofactor is FAD.

It is found in the cytoplasm. The catalysed reaction is 5-aminomethyl-2-thiouridine(34) in tRNA + S-adenosyl-L-methionine = 5-methylaminomethyl-2-thiouridine(34) in tRNA + S-adenosyl-L-homocysteine + H(+). In terms of biological role, catalyzes the last two steps in the biosynthesis of 5-methylaminomethyl-2-thiouridine (mnm(5)s(2)U) at the wobble position (U34) in tRNA. Catalyzes the FAD-dependent demodification of cmnm(5)s(2)U34 to nm(5)s(2)U34, followed by the transfer of a methyl group from S-adenosyl-L-methionine to nm(5)s(2)U34, to form mnm(5)s(2)U34. This is tRNA 5-methylaminomethyl-2-thiouridine biosynthesis bifunctional protein MnmC from Salmonella arizonae (strain ATCC BAA-731 / CDC346-86 / RSK2980).